A 124-amino-acid chain; its full sequence is Fluoride-specific ion channel FluC 2 (124 aa).

The next 4 helical transmembrane spans lie at 9 to 29 (LGIFLAAMLGGLVRYLVSTWL), 34 to 54 (DFPWGTLFVNYLGIFCLIYLV), 67 to 87 (LILALGTGFCGGLTTFSSLML), and 99 to 119 (LSLILYLLLSIGGGLLLAYYL). Residues glycine 77 and threonine 80 each contribute to the Na(+) site.

It belongs to the fluoride channel Fluc/FEX (TC 1.A.43) family.

It localises to the cell membrane. It carries out the reaction fluoride(in) = fluoride(out). Its activity is regulated as follows. Na(+) is not transported, but it plays an essential structural role and its presence is essential for fluoride channel function. Fluoride-specific ion channel. Important for reducing fluoride concentration in the cell, thus reducing its toxicity. This chain is Fluoride-specific ion channel FluC 2, found in Streptococcus pneumoniae serotype 4 (strain ATCC BAA-334 / TIGR4).